A 211-amino-acid polypeptide reads, in one-letter code: Probable nicotinate-nucleotide adenylyltransferase (211 aa).

The protein belongs to the NadD family.

The enzyme catalyses nicotinate beta-D-ribonucleotide + ATP + H(+) = deamido-NAD(+) + diphosphate. Its pathway is cofactor biosynthesis; NAD(+) biosynthesis; deamido-NAD(+) from nicotinate D-ribonucleotide: step 1/1. Its function is as follows. Catalyzes the reversible adenylation of nicotinate mononucleotide (NaMN) to nicotinic acid adenine dinucleotide (NaAD). This is Probable nicotinate-nucleotide adenylyltransferase from Legionella pneumophila (strain Corby).